The chain runs to 342 residues: Alpha-tocopherol transfer protein-like (342 aa).

Residues 1–31 (MSEESDSLRTSPSVASLSENELPPPPEPPGY) are disordered. Polar residues predominate over residues 8–19 (LRTSPSVASLSE). A CRAL-TRIO domain is found at 117–282 (KPSALKDVLA…EYGGTAGELD (166 aa)).

In terms of biological role, may act as a protein that binds a hydrophobic ligand. This Homo sapiens (Human) protein is Alpha-tocopherol transfer protein-like (TTPAL).